The primary structure comprises 535 residues: Peptide chain release factor 3 (535 aa).

One can recognise a tr-type G domain in the interval 8–277; that stretch reads KRRRTFAIIS…TLVELAPPPG (270 aa). Residues 17 to 24, 85 to 89, and 139 to 142 contribute to the GTP site; these read SHPDAGKT, DTPGH, and NKLD.

The protein belongs to the TRAFAC class translation factor GTPase superfamily. Classic translation factor GTPase family. PrfC subfamily.

Its subcellular location is the cytoplasm. Increases the formation of ribosomal termination complexes and stimulates activities of RF-1 and RF-2. It binds guanine nucleotides and has strong preference for UGA stop codons. It may interact directly with the ribosome. The stimulation of RF-1 and RF-2 is significantly reduced by GTP and GDP, but not by GMP. This chain is Peptide chain release factor 3, found in Nitrosomonas europaea (strain ATCC 19718 / CIP 103999 / KCTC 2705 / NBRC 14298).